We begin with the raw amino-acid sequence, 367 residues long: Queuine tRNA-ribosyltransferase (367 aa).

Asp91 (proton acceptor) is an active-site residue. Substrate-binding positions include Asp91–Phe95, Asp145, Gln188, and Gly215. Asp265 (nucleophile) is an active-site residue. An RNA binding; important for wobble base 34 recognition region spans residues Thr270 to Arg274. Residues Cys303, Cys305, Cys308, and His334 each coordinate Zn(2+).

It belongs to the queuine tRNA-ribosyltransferase family. In terms of assembly, homodimer. Within each dimer, one monomer is responsible for RNA recognition and catalysis, while the other monomer binds to the replacement base PreQ1. It depends on Zn(2+) as a cofactor.

The enzyme catalyses 7-aminomethyl-7-carbaguanine + guanosine(34) in tRNA = 7-aminomethyl-7-carbaguanosine(34) in tRNA + guanine. The protein operates within tRNA modification; tRNA-queuosine biosynthesis. In terms of biological role, catalyzes the base-exchange of a guanine (G) residue with the queuine precursor 7-aminomethyl-7-deazaguanine (PreQ1) at position 34 (anticodon wobble position) in tRNAs with GU(N) anticodons (tRNA-Asp, -Asn, -His and -Tyr). Catalysis occurs through a double-displacement mechanism. The nucleophile active site attacks the C1' of nucleotide 34 to detach the guanine base from the RNA, forming a covalent enzyme-RNA intermediate. The proton acceptor active site deprotonates the incoming PreQ1, allowing a nucleophilic attack on the C1' of the ribose to form the product. After dissociation, two additional enzymatic reactions on the tRNA convert PreQ1 to queuine (Q), resulting in the hypermodified nucleoside queuosine (7-(((4,5-cis-dihydroxy-2-cyclopenten-1-yl)amino)methyl)-7-deazaguanosine). In Thermosipho africanus (strain TCF52B), this protein is Queuine tRNA-ribosyltransferase.